The following is a 236-amino-acid chain: Ubiquinone biosynthesis O-methyltransferase (236 aa).

S-adenosyl-L-methionine contacts are provided by Arg40, Gly59, Asp80, and Leu124.

This sequence belongs to the methyltransferase superfamily. UbiG/COQ3 family.

It carries out the reaction a 3-demethylubiquinol + S-adenosyl-L-methionine = a ubiquinol + S-adenosyl-L-homocysteine + H(+). The enzyme catalyses a 3-(all-trans-polyprenyl)benzene-1,2-diol + S-adenosyl-L-methionine = a 2-methoxy-6-(all-trans-polyprenyl)phenol + S-adenosyl-L-homocysteine + H(+). The protein operates within cofactor biosynthesis; ubiquinone biosynthesis. Its function is as follows. O-methyltransferase that catalyzes the 2 O-methylation steps in the ubiquinone biosynthetic pathway. In Saccharophagus degradans (strain 2-40 / ATCC 43961 / DSM 17024), this protein is Ubiquinone biosynthesis O-methyltransferase.